The following is a 212-amino-acid chain: MVAPPQLRALLFAINALLSKRRYHAALAMLKGFRNGAVYGAKIRAPHALVMTFLFRSGSLREKLRAILQATYTHSWNLARFVFLYKGLCALQSHVQGKTYQAHSFVSAFIGGLLVFGNNNNINSQISMYLLSRVLFALCRLGVEKGFIPEPRLDPFPWFSGLVWGLVLWLFEYHRPTLQPSLQSSMTYLYEDSNVWHDLSDFFIYNKSQPSK.

Helical transmembrane passes span 97-117 (GKTYQAHSFVSAFIGGLLVFG) and 153-173 (LDPFPWFSGLVWGLVLWLFEY). Asn-206 carries an N-linked (GlcNAc...) asparagine glycan.

This sequence belongs to the peroxisomal membrane protein PXMP2/4 family. As to quaternary structure, interacts with PEX19.

It localises to the peroxisome membrane. In Bos taurus (Bovine), this protein is Peroxisomal membrane protein 4 (PXMP4).